Consider the following 331-residue polypeptide: Isopenicillin N synthase (331 aa).

The isopenicillin N site is built by Arg87, Tyr91, Ser183, and Tyr189. 6 residues coordinate N-[(5S)-5-amino-5-carboxypentanoyl]-L-cysteinyl-D-valine: Arg87, Tyr91, Ser183, Tyr189, His214, and Asp216. One can recognise a Fe2OG dioxygenase domain in the interval 176-288 (KPDDTLASVV…RQSLPFFVNL (113 aa)). Fe(2+) is bound by residues His214, Asp216, and His270. Residue Arg279 coordinates 2-oxoglutarate. Residue Ser281 coordinates isopenicillin N. An N-[(5S)-5-amino-5-carboxypentanoyl]-L-cysteinyl-D-valine-binding site is contributed by Ser281.

The protein belongs to the iron/ascorbate-dependent oxidoreductase family. As to quaternary structure, monomer. Requires Fe(2+) as cofactor.

The protein localises to the cytoplasm. It localises to the cytosol. The enzyme catalyses N-[(5S)-5-amino-5-carboxypentanoyl]-L-cysteinyl-D-valine + O2 = isopenicillin N + 2 H2O. Its pathway is antibiotic biosynthesis; penicillin G biosynthesis; penicillin G from L-alpha-aminoadipate and L-cysteine and L-valine: step 2/3. Isopenicillin N synthase; part of the gene cluster that mediates the biosynthesis of penicillin, the world's most important antibiotic. IpnA catalyzes the cyclization of the tripeptide N-[(5S)-5-amino-5-carboxypentanoyl]-L-cysteinyl-D-valine (LLD-ACV or ACV) to form isopenicillin N (IPN) that contains the beta-lactam nucleus. The penicillin biosynthesis occurs via 3 enzymatic steps, the first corresponding to the production of the tripeptide N-[(5S)-5-amino-5-carboxypentanoyl]-L-cysteinyl-D-valine (LLD-ACV or ACV) by the NRPS acvA. The tripeptide ACV is then cyclized to isopenicillin N (IPN) by the isopenicillin N synthase ipnA that forms the beta-lactam nucleus. Finally, the alpha-aminoadipyl side chain is exchanged for phenylacetic acid by the isopenicillin N acyltransferase penDE to yield penicillin in the peroxisomal matrix. The protein is Isopenicillin N synthase of Emericella nidulans (strain FGSC A4 / ATCC 38163 / CBS 112.46 / NRRL 194 / M139) (Aspergillus nidulans).